The sequence spans 538 residues: Sterile alpha motif domain-containing protein 1 (538 aa).

The span at 1–11 shows a compositional bias: pro residues; sequence MAGPPALPPPE. Disordered regions lie at residues 1–30 and 92–247; these read MAGP…ASPH and SYRN…GAAR. Residues 12 to 29 are compositionally biased toward low complexity; sequence TAAAATTAAAASSSAASP. The region spanning 23–99 is the SAMD1-like winged helix (WH) domain; that stretch reads SSSAASPHYQ…SISYRNAARV (77 aa). Phosphothreonine is present on Thr-107. Residues 115–125 are compositionally biased toward low complexity; it reads PRGAPAAAAAA. A compositionally biased stretch (pro residues) spans 126–139; it reads APPPTPAPPPPPAP. Residues 140-158 show a composition bias toward low complexity; the sequence is VAAAAPARAPRAAAAAATA. Ser-161 is subject to Phosphoserine. Positions 168–177 are enriched in low complexity; sequence GPRAQRAAPL. The span at 178 to 236 shows a compositional bias: pro residues; it reads AAPPPAPAAPPAVAPPAGPRRAPPPAVAAREPPLPPPPQPPAPPQQQQPPPPQPQPPPE. Low complexity predominate over residues 237-247; that stretch reads GGAVRAGGAAR. Ser-261 bears the Phosphoserine mark. Residues 282–291 are compositionally biased toward basic and acidic residues; sequence AARGRLERTR. A disordered region spans residues 282-458; the sequence is AARGRLERTR…PPGRKEKPSD (177 aa). Residues 328–351 are compositionally biased toward acidic residues; it reads KEEEEDDDEDEDEEDDVSEGSEVP. The segment covering 425 to 436 has biased composition (pro residues); sequence SPSPVPLPPGKP. Positions 462-530 constitute an SAM domain; it reads WTVMDVVEYF…KVLQQGHFED (69 aa).

Homopolymerize into a closed pentameric ring. Interacts (via SAM domain) with L3MBTL3 (via SAM domain); the interaction mediates L3MBTL3 binding to chromatin. Interacts (via WH domain) with KDM1A; the interaction modulates KDM1A function. In terms of tissue distribution, expressed in atherosclerotic lesions, not in normal intima. Expressed in foam cells.

It localises to the nucleus. The protein localises to the chromosome. Its subcellular location is the secreted. In terms of biological role, unmethylated CpG islands (CGIs)-binding protein which localizes to H3K4me3-decorated CGIs, where it acts as a transcriptional repressor. Tethers L3MBTL3 to chromatin and interacts with the KDM1A histone demethylase complex to modulate H3K4me2 and H3K4me3 levels at CGIs. Plays a role in atherogenesis by binding with LDL on cell surface and promoting LDL oxidation which leads to the formation of foam cell. The sequence is that of Sterile alpha motif domain-containing protein 1 from Homo sapiens (Human).